Reading from the N-terminus, the 383-residue chain is MDGRTRMQIDFARQPPSRVGIEWELACVDRGSGELAGVAPQILRSFPHDDAHPHVTGEFLTNTVEVVSAPHSRVGHAVDDLARLIERVVDVADPLGIDLMCAGTHPFSAWPDQDVTPDNERYATLLDRTRWWGRQMMIWGVHVHVGIEDGSKALPILNALLVHLPRFQALSASSPFWSGQETGYASNRALMFQQLPTAGLPPDLTTWADYERLIGDMTHVGVIDHHSELRWDIRPAPKWGTLETRVFDGVSTLGEIASLAALVQCLVHDLSAALDRGEELPRMQPWFVRENKWRAARYGMDAIIIQDAAGEEALVGDDTRALVERLSPTADALGCEAELRGILDIVDRGASYQRQLRVAEENDGALAPVVTHLVEELRSGLGR.

It belongs to the glutamate--cysteine ligase type 2 family. YbdK subfamily.

The enzyme catalyses L-cysteine + L-glutamate + ATP = gamma-L-glutamyl-L-cysteine + ADP + phosphate + H(+). ATP-dependent carboxylate-amine ligase which exhibits weak glutamate--cysteine ligase activity. The polypeptide is Putative glutamate--cysteine ligase 2 (Clavibacter sepedonicus (Clavibacter michiganensis subsp. sepedonicus)).